A 251-amino-acid polypeptide reads, in one-letter code: 2-amino-5-chloromuconate deaminase (251 aa).

Monomer.

It carries out the reaction (2Z,4E)-2-aminomuconate + H2O = (2Z,4E)-2-hydroxyhexa-2,4-dienedioate + NH4(+). The protein operates within xenobiotic degradation; 4-chloronitrobenzene degradation. It participates in xenobiotic degradation; nitrobenzene degradation. Cysteine residue modifying agents such as p-chloromercuribenzoate and the SH-binding metals Zn(2+), Ni(2+) and Cu(2+) completely inhibit deaminase activity, whereas Ca(2+), Mg(2+) and the histidine residue-modifying agent diethyl pyrocarbonate inhibit the activity by 23 to 50%. Its function is as follows. Involved in the biodegradation of xenobiotic compounds, such as nitrobenzene and 4-chloronitrobenzene (4-CNB). CnbZ preferentially catalyzes the deamination of 2-amino-5-chloromuconate (2A5CM) to yield 2-hydroxy-5-chloromuconate (2H5CM). Also able to catalyze the deamination of 2-aminomuconate to yield 2-hydroxymuconate, which spontaneously converts into its keto form, 2-oxalocrotonate. The chain is 2-amino-5-chloromuconate deaminase from Comamonas testosteroni (Pseudomonas testosteroni).